The primary structure comprises 349 residues: MENIETILRLAEDKILLVQNLKALQEYKVEFLGKNGIVTGELKKLGSLNEQERKEFGLKINKLKDKIQNIIKAKAEILEEQELNFKLAADKIDLTIPARRYKQGSIHPITQCSEELIQVFSQFGFTIENGPNIENDFHNFTALNFEDDHPARQMHDTFYLKSQENNKPLLLRTHTSTVQIRAMKNGKPPFRFIAPGRTYRSDSDMTHTPMFHQIEGLVMDKNINMGHLKYVITTFIKSFFENSNIELRFRPSFFPFTEPSAEVDIRMNKNDKWLEVLGCGMVHPNVLKNVGIDSSEYQGFAFGLGVERFAMLKYNIKDLRQFFEGDMRWLKHYNFGSFDIPNLAGGLTK.

Glutamate 258 contacts Mg(2+).

This sequence belongs to the class-II aminoacyl-tRNA synthetase family. Phe-tRNA synthetase alpha subunit type 1 subfamily. As to quaternary structure, tetramer of two alpha and two beta subunits. It depends on Mg(2+) as a cofactor.

The protein resides in the cytoplasm. It catalyses the reaction tRNA(Phe) + L-phenylalanine + ATP = L-phenylalanyl-tRNA(Phe) + AMP + diphosphate + H(+). This is Phenylalanine--tRNA ligase alpha subunit from Rickettsia conorii (strain ATCC VR-613 / Malish 7).